We begin with the raw amino-acid sequence, 332 residues long: GTP 3',8-cyclase (332 aa).

The 212-residue stretch at 9 to 220 (RFARKVDYLR…DQVRERIAER (212 aa)) folds into the Radical SAM core domain. Residue Arg-18 participates in GTP binding. The [4Fe-4S] cluster site is built by Cys-25 and Cys-29. Residue Tyr-31 coordinates S-adenosyl-L-methionine. Cys-32 is a [4Fe-4S] cluster binding site. Arg-67 contacts GTP. Position 71 (Gly-71) interacts with S-adenosyl-L-methionine. Residue Thr-98 participates in GTP binding. Ser-122 serves as a coordination point for S-adenosyl-L-methionine. Lys-159 provides a ligand contact to GTP. Met-193 lines the S-adenosyl-L-methionine pocket. 2 residues coordinate [4Fe-4S] cluster: Cys-258 and Cys-261. 263 to 265 (RVR) serves as a coordination point for GTP. Residue Cys-275 participates in [4Fe-4S] cluster binding.

The protein belongs to the radical SAM superfamily. MoaA family. As to quaternary structure, monomer and homodimer. [4Fe-4S] cluster is required as a cofactor.

It carries out the reaction GTP + AH2 + S-adenosyl-L-methionine = (8S)-3',8-cyclo-7,8-dihydroguanosine 5'-triphosphate + 5'-deoxyadenosine + L-methionine + A + H(+). It functions in the pathway cofactor biosynthesis; molybdopterin biosynthesis. Its function is as follows. Catalyzes the cyclization of GTP to (8S)-3',8-cyclo-7,8-dihydroguanosine 5'-triphosphate. The chain is GTP 3',8-cyclase from Pseudomonas syringae pv. syringae (strain B728a).